The sequence spans 555 residues: MIWVAVVITMLLFILVAKPTGIYLEKAFQGSKKLDKVFGPFEKLIFKITGVKEYNQTWKQYALSLVLLNGFMIVVVYFVFRLQGVLPLNPANIKGMEPTLAFNTAISFMADTNLQHYSGENGLSYLSQLIGITFLMFAAPATTLALVMAFIRGLAGKELGNFFVDFTRALTRVFLPIAFMAALVFVALGVPQTLDGVVTAQTIDGAKQSILRGPVASFVSIKELGNNGGGFFGANSTHPFENPGQMSNILQMMLMMLLPTALPFTYGRMVGNKKQGRILFVSLFMVFLLGFITITTSELNGNPVLNGMGIEHVQGSTEGKEVRFGTVFSSLYATVTTAAETGAVNTMHDTLTPIGGLVPLVNMMLNTVYGGVGAGFVNIIMYAIIAVFISGLMVGRTPEFLGKKIEGKEMKLIAVTILFHPLLILGFSALALSTHLGTEAISNSGFHGLTQVVYEYTSSAANNGSGFEGLADNTPFWNITTGLVMFLGRYFSLITMLAVAASLKEKTVVPETVGTFRTDNSLFGGIFIGTIVIVGALTFFPMLVLGPIAEFLTLK.

The next 10 helical transmembrane spans lie at 2-22 (IWVA…PTGI), 60-80 (QYAL…YFVF), 130-150 (IGIT…VMAF), 173-193 (VFLP…VPQT), 246-266 (MSNI…PFTY), 278-298 (ILFV…TTSE), 374-394 (AGFV…GLMV), 412-432 (LIAV…ALAL), 483-503 (LVMF…AASL), and 525-545 (GIFI…MLVL).

Belongs to the KdpA family. The system is composed of three essential subunits: KdpA, KdpB and KdpC.

The protein localises to the cell membrane. Functionally, part of the high-affinity ATP-driven potassium transport (or Kdp) system, which catalyzes the hydrolysis of ATP coupled with the electrogenic transport of potassium into the cytoplasm. This subunit binds the extracellular potassium ions and delivers the ions to the membrane domain of KdpB through an intramembrane tunnel. This chain is Potassium-transporting ATPase potassium-binding subunit, found in Bacillus cereus (strain ATCC 10987 / NRS 248).